The chain runs to 172 residues: Large ribosomal subunit protein uL5 (172 aa).

This sequence belongs to the universal ribosomal protein uL5 family. As to quaternary structure, component of the large ribosomal subunit.

It localises to the nucleus. It is found in the cytoplasm. Functionally, component of the ribosome, a large ribonucleoprotein complex responsible for the synthesis of proteins in the cell. The small ribosomal subunit (SSU) binds messenger RNAs (mRNAs) and translates the encoded message by selecting cognate aminoacyl-transfer RNA (tRNA) molecules. The large subunit (LSU) contains the ribosomal catalytic site termed the peptidyl transferase center (PTC), which catalyzes the formation of peptide bonds, thereby polymerizing the amino acids delivered by tRNAs into a polypeptide chain. The nascent polypeptides leave the ribosome through a tunnel in the LSU and interact with protein factors that function in enzymatic processing, targeting, and the membrane insertion of nascent chains at the exit of the ribosomal tunnel. The protein is Large ribosomal subunit protein uL5 (RPL11) of Tetrahymena thermophila.